A 203-amino-acid chain; its full sequence is Probable nicotinate-nucleotide adenylyltransferase (203 aa).

It belongs to the NadD family.

It catalyses the reaction nicotinate beta-D-ribonucleotide + ATP + H(+) = deamido-NAD(+) + diphosphate. Its pathway is cofactor biosynthesis; NAD(+) biosynthesis; deamido-NAD(+) from nicotinate D-ribonucleotide: step 1/1. Its function is as follows. Catalyzes the reversible adenylation of nicotinate mononucleotide (NaMN) to nicotinic acid adenine dinucleotide (NaAD). This chain is Probable nicotinate-nucleotide adenylyltransferase, found in Prosthecochloris aestuarii (strain DSM 271 / SK 413).